A 341-amino-acid chain; its full sequence is Ketol-acid reductoisomerase (NADP(+)) (341 aa).

The region spanning 2-182 (TDIVYDKDAD…GGLRAGGIRT (181 aa)) is the KARI N-terminal Rossmann domain. Residues 25–28 (YGSQ), K48, S51, S53, and 83–86 (DQHQ) contribute to the NADP(+) site. H108 is a catalytic residue. G134 is an NADP(+) binding site. The 146-residue stretch at 183–328 (TFTEETETDL…RELRKLFAWN (146 aa)) folds into the KARI C-terminal knotted domain. Mg(2+) is bound by residues D191, E195, E227, and E231. S252 serves as a coordination point for substrate.

This sequence belongs to the ketol-acid reductoisomerase family. The cofactor is Mg(2+).

It carries out the reaction (2R)-2,3-dihydroxy-3-methylbutanoate + NADP(+) = (2S)-2-acetolactate + NADPH + H(+). It catalyses the reaction (2R,3R)-2,3-dihydroxy-3-methylpentanoate + NADP(+) = (S)-2-ethyl-2-hydroxy-3-oxobutanoate + NADPH + H(+). The protein operates within amino-acid biosynthesis; L-isoleucine biosynthesis; L-isoleucine from 2-oxobutanoate: step 2/4. Its pathway is amino-acid biosynthesis; L-valine biosynthesis; L-valine from pyruvate: step 2/4. Its function is as follows. Involved in the biosynthesis of branched-chain amino acids (BCAA). Catalyzes an alkyl-migration followed by a ketol-acid reduction of (S)-2-acetolactate (S2AL) to yield (R)-2,3-dihydroxy-isovalerate. In the isomerase reaction, S2AL is rearranged via a Mg-dependent methyl migration to produce 3-hydroxy-3-methyl-2-ketobutyrate (HMKB). In the reductase reaction, this 2-ketoacid undergoes a metal-dependent reduction by NADPH to yield (R)-2,3-dihydroxy-isovalerate. In Clavibacter michiganensis subsp. michiganensis (strain NCPPB 382), this protein is Ketol-acid reductoisomerase (NADP(+)).